A 166-amino-acid polypeptide reads, in one-letter code: NAD(P)H-quinone oxidoreductase subunit I, chloroplastic (166 aa).

4Fe-4S ferredoxin-type domains are found at residues 55–84 (GRIHFEFDKCIACEVCVRVCPIDLPVVDWK) and 95–124 (LNYSIDFGICIFCGNCVEYCPTNCLSMTEE). Cysteine 64, cysteine 67, cysteine 70, cysteine 74, cysteine 104, cysteine 107, cysteine 110, and cysteine 114 together coordinate [4Fe-4S] cluster.

Belongs to the complex I 23 kDa subunit family. In terms of assembly, NDH is composed of at least 16 different subunits, 5 of which are encoded in the nucleus. Requires [4Fe-4S] cluster as cofactor.

It localises to the plastid. The protein resides in the chloroplast thylakoid membrane. It catalyses the reaction a plastoquinone + NADH + (n+1) H(+)(in) = a plastoquinol + NAD(+) + n H(+)(out). The enzyme catalyses a plastoquinone + NADPH + (n+1) H(+)(in) = a plastoquinol + NADP(+) + n H(+)(out). Its function is as follows. NDH shuttles electrons from NAD(P)H:plastoquinone, via FMN and iron-sulfur (Fe-S) centers, to quinones in the photosynthetic chain and possibly in a chloroplast respiratory chain. The immediate electron acceptor for the enzyme in this species is believed to be plastoquinone. Couples the redox reaction to proton translocation, and thus conserves the redox energy in a proton gradient. This Marshallia caespitosa (Barbara's buttons) protein is NAD(P)H-quinone oxidoreductase subunit I, chloroplastic.